We begin with the raw amino-acid sequence, 570 residues long: Proline--tRNA ligase (570 aa).

The protein belongs to the class-II aminoacyl-tRNA synthetase family. ProS type 1 subfamily. Homodimer.

The protein resides in the cytoplasm. The catalysed reaction is tRNA(Pro) + L-proline + ATP = L-prolyl-tRNA(Pro) + AMP + diphosphate. In terms of biological role, catalyzes the attachment of proline to tRNA(Pro) in a two-step reaction: proline is first activated by ATP to form Pro-AMP and then transferred to the acceptor end of tRNA(Pro). As ProRS can inadvertently accommodate and process non-cognate amino acids such as alanine and cysteine, to avoid such errors it has two additional distinct editing activities against alanine. One activity is designated as 'pretransfer' editing and involves the tRNA(Pro)-independent hydrolysis of activated Ala-AMP. The other activity is designated 'posttransfer' editing and involves deacylation of mischarged Ala-tRNA(Pro). The misacylated Cys-tRNA(Pro) is not edited by ProRS. In Geobacter metallireducens (strain ATCC 53774 / DSM 7210 / GS-15), this protein is Proline--tRNA ligase.